Consider the following 465-residue polypeptide: ATP synthase subunit beta (465 aa).

148 to 155 (GGAGVGKT) lines the ATP pocket.

This sequence belongs to the ATPase alpha/beta chains family. F-type ATPases have 2 components, CF(1) - the catalytic core - and CF(0) - the membrane proton channel. CF(1) has five subunits: alpha(3), beta(3), gamma(1), delta(1), epsilon(1). CF(0) has three main subunits: a(1), b(2) and c(9-12). The alpha and beta chains form an alternating ring which encloses part of the gamma chain. CF(1) is attached to CF(0) by a central stalk formed by the gamma and epsilon chains, while a peripheral stalk is formed by the delta and b chains.

Its subcellular location is the cell inner membrane. It carries out the reaction ATP + H2O + 4 H(+)(in) = ADP + phosphate + 5 H(+)(out). In terms of biological role, produces ATP from ADP in the presence of a proton gradient across the membrane. The catalytic sites are hosted primarily by the beta subunits. The polypeptide is ATP synthase subunit beta (Neisseria meningitidis serogroup B (strain ATCC BAA-335 / MC58)).